A 583-amino-acid chain; its full sequence is Scarecrow-like protein 30 (583 aa).

Disordered regions lie at residues 107–154 (GDLE…RKSK) and 182–205 (EATEKKTRHVKGSSNRYKQQKSDQ). Residues 115-124 (GNFSSITSLH) are compositionally biased toward polar residues. Residues 131 to 140 (ESTRRYRHRD) are compositionally biased toward basic and acidic residues. A GRAS domain is found at 200 to 579 (QQKSDQPVDM…RVLYAVSCWK (380 aa)). The leucine repeat I (LRI) stretch occupies residues 207–266 (VDMRNLLMQCAQAVASFDQRRAFEKLKEIREHSSRHGDATQRLGYHFAEALEARITGTMT). The tract at residues 285-350 (YKGFVQACPT…IGPPLLRVTG (66 aa)) is VHIID. The VHIID motif lies at 316–320 (LHIID). Positions 366–398 (ETGRRLKRFCDKFNVPFEYSFIAKNWENITLDD) are leucine repeat II (LRII). The segment at 407–501 (TVVNCILRLQ…RELIIRDAMS (95 aa)) is PFYRE. The tract at residues 504–579 (ACEGSERFAR…RVLYAVSCWK (76 aa)) is SAW.

This sequence belongs to the GRAS family. As to quaternary structure, interacts with SNRNP35 and CYP95. In terms of tissue distribution, expressed in seedlings, leaves, sepals, stamen and pistil, and in the quiescent center of root meristem.

It is found in the nucleus. Its function is as follows. Probable transcription factor involved in plant development. In Arabidopsis thaliana (Mouse-ear cress), this protein is Scarecrow-like protein 30 (SCL30).